A 434-amino-acid chain; its full sequence is Glutamate-1-semialdehyde 2,1-aminomutase 1 (434 aa).

K270 is subject to N6-(pyridoxal phosphate)lysine.

This sequence belongs to the class-III pyridoxal-phosphate-dependent aminotransferase family. HemL subfamily. In terms of assembly, homodimer. Requires pyridoxal 5'-phosphate as cofactor.

It is found in the cytoplasm. It carries out the reaction (S)-4-amino-5-oxopentanoate = 5-aminolevulinate. It participates in porphyrin-containing compound metabolism; protoporphyrin-IX biosynthesis; 5-aminolevulinate from L-glutamyl-tRNA(Glu): step 2/2. The chain is Glutamate-1-semialdehyde 2,1-aminomutase 1 from Bacillus anthracis (strain CDC 684 / NRRL 3495).